The sequence spans 174 residues: Small ribosomal subunit protein uS5 (174 aa).

Residues 16–79 (FSELIVSVRR…NAARKNMIRV (64 aa)) form the S5 DRBM domain.

This sequence belongs to the universal ribosomal protein uS5 family. As to quaternary structure, part of the 30S ribosomal subunit. Contacts proteins S4 and S8.

In terms of biological role, with S4 and S12 plays an important role in translational accuracy. Located at the back of the 30S subunit body where it stabilizes the conformation of the head with respect to the body. This chain is Small ribosomal subunit protein uS5, found in Ehrlichia ruminantium (strain Gardel).